The sequence spans 825 residues: Exocyst complex component SEC10a (825 aa).

Residues 244 to 266 (RGLEVAVANLQDYCNELENRLLS) adopt a coiled-coil conformation.

It belongs to the SEC10 family. As to quaternary structure, the exocyst complex is composed of SEC3, SEC5, SEC6, SEC8, SEC10, EXO70A1 and EXO84B. Interacts with EXO84B. Binds to EXO70E2. Binds directly to B1L. As to expression, expressed in seedlings, roots, leaves and flowers.

It is found in the cytoplasm. The protein resides in the cytosol. The protein localises to the secreted. Its subcellular location is the extracellular exosome. Functionally, component of the exocyst complex involved in the docking of exocytic vesicles with fusion sites on the plasma membrane during regulated or polarized secretion. Involved in polarized cell growth and organ morphogenesis. During cytokinesis, involved in cell plate initiation, cell plate maturation and formation of new primary cell wall. This chain is Exocyst complex component SEC10a, found in Arabidopsis thaliana (Mouse-ear cress).